A 326-amino-acid polypeptide reads, in one-letter code: Mitochondrial glycine transporter (326 aa).

Solcar repeat units follow at residues 45 to 134 (HPVI…SKQY), 141 to 225 (PTAL…TRTA), and 237 to 321 (LIPL…MMAR). The next 6 helical transmembrane spans lie at 51 to 76 (FLCG…TRLQ), 109 to 135 (GMSP…KQYF), 147 to 172 (VILG…TRYE), 200 to 223 (GLTA…SQTR), 241 to 267 (INFS…KTHM), and 296 to 314 (GSVP…AWTV).

The protein belongs to the mitochondrial carrier (TC 2.A.29) family. SLC25A38 subfamily.

The protein resides in the mitochondrion inner membrane. The catalysed reaction is glycine(in) = glycine(out). In terms of biological role, mitochondrial glycine transporter that imports glycine into the mitochondrial matrix. Plays an important role in providing glycine for the first enzymatic step in heme biosynthesis, the condensation of glycine with succinyl-CoA to produce 5-aminolevulinate (ALA) in the mitochondrial matrix. Required during erythropoiesis. Its function is as follows. Plays a role as pro-apoptotic protein that induces caspase-dependent apoptosis. This is Mitochondrial glycine transporter from Mus musculus (Mouse).